A 377-amino-acid polypeptide reads, in one-letter code: UDP-N-acetylglucosamine--N-acetylmuramyl-(pentapeptide) pyrophosphoryl-undecaprenol N-acetylglucosamine transferase (377 aa).

Residues 11–13 (TGG), N123, R164, S194, and Q295 contribute to the UDP-N-acetyl-alpha-D-glucosamine site.

Belongs to the glycosyltransferase 28 family. MurG subfamily.

It localises to the cell inner membrane. The enzyme catalyses di-trans,octa-cis-undecaprenyl diphospho-N-acetyl-alpha-D-muramoyl-L-alanyl-D-glutamyl-meso-2,6-diaminopimeloyl-D-alanyl-D-alanine + UDP-N-acetyl-alpha-D-glucosamine = di-trans,octa-cis-undecaprenyl diphospho-[N-acetyl-alpha-D-glucosaminyl-(1-&gt;4)]-N-acetyl-alpha-D-muramoyl-L-alanyl-D-glutamyl-meso-2,6-diaminopimeloyl-D-alanyl-D-alanine + UDP + H(+). The protein operates within cell wall biogenesis; peptidoglycan biosynthesis. Its function is as follows. Cell wall formation. Catalyzes the transfer of a GlcNAc subunit on undecaprenyl-pyrophosphoryl-MurNAc-pentapeptide (lipid intermediate I) to form undecaprenyl-pyrophosphoryl-MurNAc-(pentapeptide)GlcNAc (lipid intermediate II). The polypeptide is UDP-N-acetylglucosamine--N-acetylmuramyl-(pentapeptide) pyrophosphoryl-undecaprenol N-acetylglucosamine transferase (Opitutus terrae (strain DSM 11246 / JCM 15787 / PB90-1)).